The following is a 355-amino-acid chain: MAIRSLPSSSRCSSSSSSSSYSLASTSLSNRLETIFKKASELCTLCDIEACVIYYGPDGELKTWPPEREKVEDIALRYSQLNEALRRKKSVTLYDFLNKKKDKTNLEKKAKITDNDDLKTCLKNVNILKYPLADHYSPDQVSQLIQSLEPHVSKVRERIRFVESQKHKETKPDHQSLASSSLNHQTQSLNPSQFSLFMYNHGDNTLSQIPVSASNFNQDYFSALLEQSELKSQIMKQDLCGYEQNMCMSNHGDATLSQIPLSASNLNQDFSALLQDESGLMQQELCGYDQNMFMNNNNFQHSFVSNTQDHSAPVVQESVNNNYGLMPHVPCGYDQNLFTSDITNNNLLINNSMFL.

The disordered stretch occupies residues 1-22 (MAIRSLPSSSRCSSSSSSSSYS). Residues 26–68 (TSLSNRLETIFKKASELCTLCDIEACVIYYGPDGELKTWPPER) enclose the MADS-box domain. Positions 162-174 (VESQKHKETKPDH) are enriched in basic and acidic residues. The segment at 162 to 186 (VESQKHKETKPDHQSLASSSLNHQT) is disordered. Residues 176 to 186 (SLASSSLNHQT) are compositionally biased toward polar residues.

As to quaternary structure, interacts with MEE14/CBP1.

It is found in the nucleus. Its function is as follows. Probable transcription factor that may function in the maintenance of the proper function of the central cell in pollen tube attraction. This is Agamous-like MADS-box protein AGL81 from Arabidopsis thaliana (Mouse-ear cress).